We begin with the raw amino-acid sequence, 320 residues long: Integrin-binding sialoprotein (320 aa).

Positions 1–16 are cleaved as a signal peptide; the sequence is MKTALILLCILGMASA. Residues Ser31, Ser68, Ser76, Ser77, and Ser96 each carry the phosphoserine modification. Disordered regions lie at residues 60-117, 136-225, and 238-264; these read PVQG…VTAS, LPKK…RELT, and FQQT…VEYG. The span at 67–106 shows a compositional bias: acidic residues; sequence SSEENGDGDSSEEEGEEEETSNEEENNEDSEGNEDQEAEA. Asn108 carries an N-linked (GlcNAc...) asparagine glycan. Basic and acidic residues predominate over residues 139–152; that stretch reads KAGDAEGKAPKMKE. The residue at position 153 (Ser153) is a Phosphoserine. Positions 153 to 176 are enriched in acidic residues; sequence SDEEEEEEEEEENENEEAEVDENE. Polar residues-rich tracts occupy residues 177 to 188 and 249 to 261; these read QVVNGTSTNSTE and GTTS…SSTV. Asn180 and Asn185 each carry an N-linked (GlcNAc...) asparagine glycan. The short motif at 289–291 is the Integrin-binding motif element; it reads RGD. Residues Tyr316 and Tyr317 each carry the sulfotyrosine modification.

In terms of assembly, monomer. Interacts with integrins; the interaction promotes cell adhesion.

It localises to the secreted. Binds tightly to hydroxyapatite. Appears to form an integral part of the mineralized matrix. Probably important to cell-matrix interaction. Promotes adhesion and migration of various cells via the alpha-V/beta-3 integrin receptor (ITGAV:ITGB3). The protein is Integrin-binding sialoprotein (Ibsp) of Rattus norvegicus (Rat).